The sequence spans 1399 residues: DNA-directed RNA polymerase subunit beta' (1399 aa).

Positions 71, 73, 86, and 89 each coordinate Zn(2+). Asp-462, Asp-464, and Asp-466 together coordinate Mg(2+). 4 residues coordinate Zn(2+): Cys-810, Cys-884, Cys-891, and Cys-894. Positions 1379-1399 (KQAAIVPSQPEPQPLALPPAE) are disordered. A compositionally biased stretch (pro residues) spans 1387–1399 (QPEPQPLALPPAE).

Belongs to the RNA polymerase beta' chain family. In terms of assembly, the RNAP catalytic core consists of 2 alpha, 1 beta, 1 beta' and 1 omega subunit. When a sigma factor is associated with the core the holoenzyme is formed, which can initiate transcription. Requires Mg(2+) as cofactor. It depends on Zn(2+) as a cofactor.

The enzyme catalyses RNA(n) + a ribonucleoside 5'-triphosphate = RNA(n+1) + diphosphate. In terms of biological role, DNA-dependent RNA polymerase catalyzes the transcription of DNA into RNA using the four ribonucleoside triphosphates as substrates. This Bradyrhizobium sp. (strain ORS 278) protein is DNA-directed RNA polymerase subunit beta'.